Reading from the N-terminus, the 455-residue chain is Fumarate hydratase class II (455 aa).

Substrate-binding positions include 96-98 (SGT), 122-125 (HPND), 132-134 (SSN), and threonine 180. The Proton donor/acceptor role is filled by histidine 181. Serine 311 is a catalytic residue. Substrate is bound by residues serine 312 and 317–319 (KVN).

Belongs to the class-II fumarase/aspartase family. Fumarase subfamily. As to quaternary structure, homotetramer.

It is found in the cytoplasm. It catalyses the reaction (S)-malate = fumarate + H2O. It functions in the pathway carbohydrate metabolism; tricarboxylic acid cycle; (S)-malate from fumarate: step 1/1. Involved in the TCA cycle. Catalyzes the stereospecific interconversion of fumarate to L-malate. This is Fumarate hydratase class II from Listeria monocytogenes serotype 4b (strain F2365).